The following is a 424-amino-acid chain: UPF0761 membrane protein Smal_0716 (424 aa).

6 helical membrane passes run 48–68, 101–121, 144–164, 181–201, 216–236, and 251–271; these read VFAL…FPVF, SAGQ…LITL, FLVY…SLAV, WLAD…CITL, AVPG…GIGA, and VAFV…VLLG.

This sequence belongs to the UPF0761 family.

It localises to the cell inner membrane. This chain is UPF0761 membrane protein Smal_0716, found in Stenotrophomonas maltophilia (strain R551-3).